The sequence spans 802 residues: Post-transcriptional regulator mkt1 (802 aa).

A phosphoserine mark is found at serine 227, serine 228, and serine 230.

Belongs to the XPG/RAD2 endonuclease family. As to quaternary structure, interacts with pab1 binding protein ath1.

Functionally, involved in post-transcriptional regulation of gene expression by 3'-UTR-mediated RNA regulation. Promotes interactions between mRNA and poly(A)-binding protein. Binds the 3' UTR of mRNAs, centromeric transcripts and antisense-rDNA. Required for the establishment but not the maintenance of heterochromatin at pericentromeres, and for the maintenance of small domains of facultative heterochromatin known as HOODs. This Schizosaccharomyces pombe (strain 972 / ATCC 24843) (Fission yeast) protein is Post-transcriptional regulator mkt1.